The following is a 654-amino-acid chain: Cytochrome B pre-mRNA-processing protein 1 (654 aa).

It is found in the mitochondrion. Responsible for conferring a stable 5'-end on cytochrome b mRNA. The protein is Cytochrome B pre-mRNA-processing protein 1 (CBP1) of Saccharomyces cerevisiae (strain ATCC 204508 / S288c) (Baker's yeast).